A 500-amino-acid polypeptide reads, in one-letter code: Putative DNA recombinase (500 aa).

Residues 1–144 enclose the Resolvase/invertase-type recombinase catalytic domain; sequence MIAIYVRVST…SGRLQKMKKG (144 aa). Ser9 functions as the O-(5'-phospho-DNA)-serine intermediate in the catalytic mechanism. A DNA-binding region (recombinase) is located at residues 152–288; it reads LYGYKFVKEK…QELLGQSKRK (137 aa). Residues 372–448 adopt a coiled-coil conformation; it reads KEAEQSNHLS…IQSKMKVLDD (77 aa).

In the N-terminal section; belongs to the site-specific recombinase resolvase family.

Putative site-specific recombinase having a very important role in sporulation. It probably plays a role in the recombination of SpoIIIC and SpoIVCB to form sigma K factor. This chain is Putative DNA recombinase (cisA), found in Bacillus subtilis (strain 168).